A 273-amino-acid polypeptide reads, in one-letter code: Putative pyruvate, phosphate dikinase regulatory protein (273 aa).

153-160 is an ADP binding site; it reads GVSRTSKS.

Belongs to the pyruvate, phosphate/water dikinase regulatory protein family. PDRP subfamily.

It carries out the reaction N(tele)-phospho-L-histidyl/L-threonyl-[pyruvate, phosphate dikinase] + ADP = N(tele)-phospho-L-histidyl/O-phospho-L-threonyl-[pyruvate, phosphate dikinase] + AMP + H(+). It catalyses the reaction N(tele)-phospho-L-histidyl/O-phospho-L-threonyl-[pyruvate, phosphate dikinase] + phosphate + H(+) = N(tele)-phospho-L-histidyl/L-threonyl-[pyruvate, phosphate dikinase] + diphosphate. Functionally, bifunctional serine/threonine kinase and phosphorylase involved in the regulation of the pyruvate, phosphate dikinase (PPDK) by catalyzing its phosphorylation/dephosphorylation. The chain is Putative pyruvate, phosphate dikinase regulatory protein from Ehrlichia ruminantium (strain Welgevonden).